Reading from the N-terminus, the 117-residue chain is UPF0342 protein BcerKBAB4_0767 (117 aa).

The protein belongs to the UPF0342 family.

In Bacillus mycoides (strain KBAB4) (Bacillus weihenstephanensis), this protein is UPF0342 protein BcerKBAB4_0767.